The chain runs to 283 residues: Bifunctional protein FolD (283 aa).

NADP(+)-binding positions include 163–165, serine 188, and isoleucine 229; that span reads GRS.

Belongs to the tetrahydrofolate dehydrogenase/cyclohydrolase family. As to quaternary structure, homodimer.

It catalyses the reaction (6R)-5,10-methylene-5,6,7,8-tetrahydrofolate + NADP(+) = (6R)-5,10-methenyltetrahydrofolate + NADPH. The enzyme catalyses (6R)-5,10-methenyltetrahydrofolate + H2O = (6R)-10-formyltetrahydrofolate + H(+). Its pathway is one-carbon metabolism; tetrahydrofolate interconversion. Catalyzes the oxidation of 5,10-methylenetetrahydrofolate to 5,10-methenyltetrahydrofolate and then the hydrolysis of 5,10-methenyltetrahydrofolate to 10-formyltetrahydrofolate. This is Bifunctional protein FolD from Campylobacter concisus (strain 13826).